The following is a 95-amino-acid chain: Neutrophil antibiotic peptide NP-4 (95 aa).

The N-terminal stretch at 1–19 (MRTLALLAAILLVTLQAQA) is a signal peptide. The propeptide occupies 20–62 (ELHSGMADDGVDQQQPRAQDLDVAVYIKQDETSPLEVLGAKAG). 3 disulfide bridges follow: C65-C93, C67-C82, and C72-C92.

This sequence belongs to the alpha-defensin family.

It is found in the secreted. Functionally, microbicidal activity. This Oryctolagus cuniculus (Rabbit) protein is Neutrophil antibiotic peptide NP-4.